The sequence spans 150 residues: Group IIC secretory phospholipase A2 (150 aa).

The N-terminal stretch at 1–20 (MKGIAIFLVFIFYWTTSTLS) is a signal peptide. Disulfide bonds link Cys46/Cys143, Cys48/Cys64, Cys63/Cys121, Cys69/Cys150, Cys70/Cys114, Cys79/Cys107, Cys97/Cys112, and Cys99/Cys105. Ca(2+)-binding residues include Tyr47, Gly49, and Gly51. His67 is a catalytic residue. Residue Asp68 participates in Ca(2+) binding. N-linked (GlcNAc...) asparagine glycosylation is present at Asn92. Asp115 is a catalytic residue.

This sequence belongs to the phospholipase A2 family. The cofactor is Ca(2+). As to expression, testis specific.

It localises to the secreted. It carries out the reaction a 1,2-diacyl-sn-glycero-3-phosphocholine + H2O = a 1-acyl-sn-glycero-3-phosphocholine + a fatty acid + H(+). Its function is as follows. PA2 catalyzes the calcium-dependent hydrolysis of the 2-acyl groups in 3-sn-phosphoglycerides. Testis PA2 may be important in the production of prostaglandins, by the release of arachidonic acid, which in turn are necessary for the contractions of the seminiferous tubules and the testicular capsule; they also seem to decrease sperm transit time through the male reproductive tract. The polypeptide is Group IIC secretory phospholipase A2 (Pla2g2c) (Mus musculus (Mouse)).